Consider the following 439-residue polypeptide: SET domain-containing protein 4 (439 aa).

A compositionally biased stretch (basic residues) spans 1–19 (MQRRRGRTERARKRRRRSS). The tract at residues 1 to 25 (MQRRRGRTERARKRRRRSSGSRAVN) is disordered. The region spanning 47–272 (TDLVPASFPG…KHQEVFICYG (226 aa)) is the SET domain. S-adenosyl-L-methionine is bound at residue Tyr271.

The protein belongs to the class V-like SAM-binding methyltransferase superfamily. SETD4 family. As to quaternary structure, forms a ternary complex with TBK1 and ZNF268; the interaction with TBK1 is ZNF268-dependent and leads to TBK1 monomethylation. As to expression, expressed in the forebrain subventricular zone, in quiescent neural stem cells.

It localises to the cytoplasm. Its subcellular location is the cytosol. The protein localises to the nucleus. The enzyme catalyses L-lysyl(4)-[histone H3] + S-adenosyl-L-methionine = N(6)-methyl-L-lysyl(4)-[histone H3] + S-adenosyl-L-homocysteine + H(+). It catalyses the reaction N(6)-methyl-L-lysyl(4)-[histone H3] + S-adenosyl-L-methionine = N(6),N(6)-dimethyl-L-lysyl(4)-[histone H3] + S-adenosyl-L-homocysteine + H(+). It carries out the reaction L-lysyl(20)-[histone H4] + S-adenosyl-L-methionine = N(6)-methyl-L-lysyl(20)-[histone H4] + S-adenosyl-L-homocysteine + H(+). The catalysed reaction is N(6)-methyl-L-lysyl(20)-[histone H4] + S-adenosyl-L-methionine = N(6),N(6)-dimethyl-L-lysyl(20)-[histone H4] + S-adenosyl-L-homocysteine + H(+). The enzyme catalyses N(6),N(6)-dimethyl-L-lysyl(20)-[histone H4] + S-adenosyl-L-methionine = N(6),N(6),N(6)-trimethyl-L-lysyl(20)-[histone H4] + S-adenosyl-L-homocysteine + H(+). It catalyses the reaction L-lysyl-[protein] + S-adenosyl-L-methionine = N(6)-methyl-L-lysyl-[protein] + S-adenosyl-L-homocysteine + H(+). Functionally, protein-lysine N-methyltransferase that methylates both histones and non-histone proteins. Via its catalytic activity, regulates many processes, including cell proliferation, cell differentiation, inflammatory response and apoptosis. Regulates the inflammatory response by mediating mono- and dimethylation of 'Lys-4' of histone H3 (H3K4me1 and H3K4me2, respectively), leading to activate the transcription of pro-inflammatory cytokines IL6 and TNF-alpha. Also involved in the regulation of stem cell quiescence by catalyzing the trimethylation of 'Lys-20' of histone H4 (H4K20me3), thereby promoting heterochromatin formation. In the brain, epigenetically controls quiescence of neural stem cells for sustaining a protected neural stem cell population and maintaining a stem cell reservoir for neurogenesis. Involved in proliferation, migration, paracrine and myogenic differentiation of bone marrow mesenchymal stem cells (BMSCs). Through the catalysis of XRCC5/Ku70 trimethylation, regulates BAX-mediated apoptosis. SETD4-catalyzed XRCC5 methylation results in XRCC5 translocation to the cytoplasm, where it interacts with BAX, sequestering it from the mitochondria, hence preventing BAX-mediated apoptosis. The polypeptide is SET domain-containing protein 4 (Mus musculus (Mouse)).